The primary structure comprises 379 residues: tRNA-specific 2-thiouridylase MnmA (379 aa).

ATP is bound by residues 9-16 (AMSGGVDS) and methionine 35. The segment at 94-96 (NPD) is interaction with target base in tRNA. Catalysis depends on cysteine 99, which acts as the Nucleophile. Cysteines 99 and 195 form a disulfide. Glycine 123 contributes to the ATP binding site. The interaction with tRNA stretch occupies residues 145-147 (KDQ). Residue cysteine 195 is the Cysteine persulfide intermediate of the active site. An interaction with tRNA region spans residues 307-308 (RY).

The protein belongs to the MnmA/TRMU family.

The protein resides in the cytoplasm. It catalyses the reaction S-sulfanyl-L-cysteinyl-[protein] + uridine(34) in tRNA + AH2 + ATP = 2-thiouridine(34) in tRNA + L-cysteinyl-[protein] + A + AMP + diphosphate + H(+). Functionally, catalyzes the 2-thiolation of uridine at the wobble position (U34) of tRNA, leading to the formation of s(2)U34. In Xylella fastidiosa (strain M23), this protein is tRNA-specific 2-thiouridylase MnmA.